The chain runs to 150 residues: Large ribosomal subunit protein uL15 (150 aa).

It belongs to the universal ribosomal protein uL15 family. As to quaternary structure, part of the 50S ribosomal subunit.

In terms of biological role, binds to the 23S rRNA. The chain is Large ribosomal subunit protein uL15 from Rickettsia prowazekii (strain Madrid E).